Consider the following 564-residue polypeptide: Potassium-transporting ATPase potassium-binding subunit (564 aa).

The next 10 helical transmembrane spans lie at 4-24 (YDYWLIIAFFAVVLVPAPFLG), 67-87 (MLALLAFNLAGFLLLFAILLF), 135-155 (AGLTVQNFVSAATGLAVLVAL), 179-199 (LYGLLPLCLVLALFLVWQGVP), 254-274 (WANLFELAAIILIPVALVFTF), 286-306 (AILGCMLALFLIGGATSLWAE), 382-402 (AGMYGMLLNVLIAVFLAGLMI), 420-440 (LLVVTLLVMPVGVLVLGAIAA), 487-507 (LMLGLGMLIGRFGYILPVLAL), and 528-548 (GPLFVTLLTVTILLVGGLTFL).

Belongs to the KdpA family. As to quaternary structure, the system is composed of three essential subunits: KdpA, KdpB and KdpC.

The protein resides in the cell inner membrane. Its function is as follows. Part of the high-affinity ATP-driven potassium transport (or Kdp) system, which catalyzes the hydrolysis of ATP coupled with the electrogenic transport of potassium into the cytoplasm. This subunit binds the periplasmic potassium ions and delivers the ions to the membrane domain of KdpB through an intramembrane tunnel. The chain is Potassium-transporting ATPase potassium-binding subunit from Pseudomonas fluorescens (strain SBW25).